A 399-amino-acid polypeptide reads, in one-letter code: DNA polymerase IV (399 aa).

Positions 5-187 constitute a UmuC domain; it reads ILHCDLNNFY…LPVEALLYVG (183 aa). Positions 9 and 105 each coordinate Mg(2+). The active site involves Glu-106.

This sequence belongs to the DNA polymerase type-Y family. As to quaternary structure, monomer. Mg(2+) serves as cofactor.

It localises to the cytoplasm. The enzyme catalyses DNA(n) + a 2'-deoxyribonucleoside 5'-triphosphate = DNA(n+1) + diphosphate. Functionally, poorly processive, error-prone DNA polymerase involved in untargeted mutagenesis. Copies undamaged DNA at stalled replication forks, which arise in vivo from mismatched or misaligned primer ends. These misaligned primers can be extended by PolIV. Exhibits no 3'-5' exonuclease (proofreading) activity. May be involved in translesional synthesis, in conjunction with the beta clamp from PolIII. This Acetivibrio thermocellus (strain ATCC 27405 / DSM 1237 / JCM 9322 / NBRC 103400 / NCIMB 10682 / NRRL B-4536 / VPI 7372) (Clostridium thermocellum) protein is DNA polymerase IV.